Consider the following 305-residue polypeptide: Methionyl-tRNA formyltransferase (305 aa).

111-114 (SLLP) lines the (6S)-5,6,7,8-tetrahydrofolate pocket.

This sequence belongs to the Fmt family.

The enzyme catalyses L-methionyl-tRNA(fMet) + (6R)-10-formyltetrahydrofolate = N-formyl-L-methionyl-tRNA(fMet) + (6S)-5,6,7,8-tetrahydrofolate + H(+). Its function is as follows. Attaches a formyl group to the free amino group of methionyl-tRNA(fMet). The formyl group appears to play a dual role in the initiator identity of N-formylmethionyl-tRNA by promoting its recognition by IF2 and preventing the misappropriation of this tRNA by the elongation apparatus. In Helicobacter pylori (strain J99 / ATCC 700824) (Campylobacter pylori J99), this protein is Methionyl-tRNA formyltransferase.